The following is an 81-amino-acid chain: Cytochrome b559 subunit alpha (81 aa).

The chain crosses the membrane as a helical span at residues 21–35 (VIHSITIPMLFIAGW). His23 lines the heme pocket.

This sequence belongs to the PsbE/PsbF family. As to quaternary structure, heterodimer of an alpha subunit and a beta subunit. PSII is composed of 1 copy each of membrane proteins PsbA, PsbB, PsbC, PsbD, PsbE, PsbF, PsbH, PsbI, PsbJ, PsbK, PsbL, PsbM, PsbT, PsbX, PsbY, PsbZ, Psb30/Ycf12, peripheral proteins PsbO, CyanoQ (PsbQ), PsbU, PsbV and a large number of cofactors. It forms dimeric complexes. Requires heme b as cofactor.

It is found in the cellular thylakoid membrane. Functionally, this b-type cytochrome is tightly associated with the reaction center of photosystem II (PSII). PSII is a light-driven water:plastoquinone oxidoreductase that uses light energy to abstract electrons from H(2)O, generating O(2) and a proton gradient subsequently used for ATP formation. It consists of a core antenna complex that captures photons, and an electron transfer chain that converts photonic excitation into a charge separation. The chain is Cytochrome b559 subunit alpha from Crocosphaera subtropica (strain ATCC 51142 / BH68) (Cyanothece sp. (strain ATCC 51142)).